A 652-amino-acid chain; its full sequence is DNA mismatch repair protein MutL (652 aa).

Disordered regions lie at residues 357–377 and 425–457; these read LGAN…NYPS and PDKG…NSTD. Residues 365 to 375 are compositionally biased toward polar residues; it reads SHSSNTPTLNY.

This sequence belongs to the DNA mismatch repair MutL/HexB family.

In terms of biological role, this protein is involved in the repair of mismatches in DNA. It is required for dam-dependent methyl-directed DNA mismatch repair. May act as a 'molecular matchmaker', a protein that promotes the formation of a stable complex between two or more DNA-binding proteins in an ATP-dependent manner without itself being part of a final effector complex. In Colwellia psychrerythraea (strain 34H / ATCC BAA-681) (Vibrio psychroerythus), this protein is DNA mismatch repair protein MutL.